A 402-amino-acid chain; its full sequence is 1-deoxy-D-xylulose 5-phosphate reductoisomerase (402 aa).

6 residues coordinate NADPH: T10, G11, S12, I13, N38, and N124. K125 lines the 1-deoxy-D-xylulose 5-phosphate pocket. E126 is a binding site for NADPH. Residue D150 coordinates Mn(2+). 1-deoxy-D-xylulose 5-phosphate-binding residues include S151, E152, S186, and H209. E152 contacts Mn(2+). Position 215 (G215) interacts with NADPH. 1-deoxy-D-xylulose 5-phosphate-binding residues include S222, N227, K228, and E231. E231 contributes to the Mn(2+) binding site.

It belongs to the DXR family. It depends on Mg(2+) as a cofactor. Mn(2+) is required as a cofactor.

The catalysed reaction is 2-C-methyl-D-erythritol 4-phosphate + NADP(+) = 1-deoxy-D-xylulose 5-phosphate + NADPH + H(+). The protein operates within isoprenoid biosynthesis; isopentenyl diphosphate biosynthesis via DXP pathway; isopentenyl diphosphate from 1-deoxy-D-xylulose 5-phosphate: step 1/6. Catalyzes the NADPH-dependent rearrangement and reduction of 1-deoxy-D-xylulose-5-phosphate (DXP) to 2-C-methyl-D-erythritol 4-phosphate (MEP). The sequence is that of 1-deoxy-D-xylulose 5-phosphate reductoisomerase from Vibrio vulnificus (strain CMCP6).